The primary structure comprises 213 residues: MIVEHAIDYIDYLMNYVDFTEKYFLLTIACVVFNPTWWNITARMEYKTKFMTKICGSKENGCYLLAFLIFSLGILRDWLFSEALIRQPIFQEFDRFEVEVLSYILYGFGGILVLAAYLKLGITGTYLGDYFGILMKERVTGFPFNVMNNPMYNGSVMLFIAHALSYKSVAGLVLSFVVYVVYKFALIFEESFTNYIYSTAAANAAKKNKSKSK.

Over 1-21 the chain is Lumenal; sequence MIVEHAIDYIDYLMNYVDFTE. The helical intramembrane region spans 22 to 42; the sequence is KYFLLTIACVVFNPTWWNITA. The Lumenal segment spans residues 43–54; sequence RMEYKTKFMTKI. A helical transmembrane segment spans residues 55 to 75; sequence CGSKENGCYLLAFLIFSLGIL. Topologically, residues 76-102 are cytoplasmic; the sequence is RDWLFSEALIRQPIFQEFDRFEVEVLS. A helical transmembrane segment spans residues 103–123; sequence YILYGFGGILVLAAYLKLGIT. 107-109 lines the S-adenosyl-L-methionine pocket; that stretch reads GFG. Residues 124–166 are Lumenal-facing; it reads GTYLGDYFGILMKERVTGFPFNVMNNPMYNGSVMLFIAHALSY. A helical membrane pass occupies residues 167 to 187; it reads KSVAGLVLSFVVYVVYKFALI. Residues 188–213 are Cytoplasmic-facing; it reads FEESFTNYIYSTAAANAAKKNKSKSK. 189–190 serves as a coordination point for S-adenosyl-L-methionine; that stretch reads EE.

It belongs to the class VI-like SAM-binding methyltransferase superfamily. PEMT/PEM2 methyltransferase family.

It is found in the endoplasmic reticulum membrane. The protein resides in the mitochondrion membrane. It catalyses the reaction a 1,2-diacyl-sn-glycero-3-phospho-N-methylethanolamine + S-adenosyl-L-methionine = a 1,2-diacyl-sn-glycero-3-phospho-N,N-dimethylethanolamine + S-adenosyl-L-homocysteine + H(+). The enzyme catalyses a 1,2-diacyl-sn-glycero-3-phospho-N,N-dimethylethanolamine + S-adenosyl-L-methionine = a 1,2-diacyl-sn-glycero-3-phosphocholine + S-adenosyl-L-homocysteine + H(+). The catalysed reaction is a 1,2-diacyl-sn-glycero-3-phosphoethanolamine + S-adenosyl-L-methionine = a 1,2-diacyl-sn-glycero-3-phospho-N-methylethanolamine + S-adenosyl-L-homocysteine + H(+). It functions in the pathway phospholipid metabolism; phosphatidylcholine biosynthesis. In terms of biological role, catalyzes the three sequential steps of the methylation pathway of phosphatidylcholine biosynthesis, the SAM-dependent methylation of phosphatidylethanolamine (PE) to phosphatidylmonomethylethanolamine (PMME), PMME to phosphatidyldimethylethanolamine (PDME), and PDME to phosphatidylcholine (PC). This is Phosphatidylethanolamine N-methyltransferase A (pemtA) from Dictyostelium discoideum (Social amoeba).